A 231-amino-acid polypeptide reads, in one-letter code: Large ribosomal subunit protein uL1 (231 aa).

It belongs to the universal ribosomal protein uL1 family. Part of the 50S ribosomal subunit.

In terms of biological role, binds directly to 23S rRNA. The L1 stalk is quite mobile in the ribosome, and is involved in E site tRNA release. Its function is as follows. Protein L1 is also a translational repressor protein, it controls the translation of the L11 operon by binding to its mRNA. The sequence is that of Large ribosomal subunit protein uL1 from Buchnera aphidicola subsp. Acyrthosiphon pisum (strain APS) (Acyrthosiphon pisum symbiotic bacterium).